The primary structure comprises 230 residues: Ureidoacrylate amidohydrolase RutB (230 aa).

The Proton acceptor role is filled by Asp24. The active site involves Lys133. Catalysis depends on Cys166, which acts as the Nucleophile.

This sequence belongs to the isochorismatase family. RutB subfamily.

The enzyme catalyses (Z)-3-ureidoacrylate + H2O + H(+) = (Z)-3-aminoacrylate + NH4(+) + CO2. It carries out the reaction (Z)-3-ureidoacrylate + H2O = (Z)-3-aminoacrylate + carbamate + H(+). It catalyses the reaction (Z)-2-methylureidoacrylate + H2O + H(+) = (Z)-2-methylaminoacrylate + NH4(+) + CO2. Functionally, hydrolyzes ureidoacrylate to form aminoacrylate and carbamate. The carbamate hydrolyzes spontaneously, thereby releasing one of the nitrogen atoms of the pyrimidine ring as ammonia and one of its carbon atoms as CO2. This chain is Ureidoacrylate amidohydrolase RutB, found in Escherichia coli O111:H- (strain 11128 / EHEC).